Reading from the N-terminus, the 215-residue chain is Cytochrome b-c1 complex subunit Rieske, mitochondrial (215 aa).

Residues 1–22 (MLGIRSSVKTCFKPMSLTSKRL) constitute a mitochondrion transit peptide. Residues 23 to 30 (ISQSLLAS) constitute a propeptide, removed in mature form. Over 31-50 (KSTYRTPNFDDVLKENNDAD) the chain is Mitochondrial matrix. Residues 51–80 (KGRSYAYFMVGAMGLLSSAGAKSTVETFIS) form a helical membrane-spanning segment. Over 81 to 215 (SMTATADVLA…EFDGDKVIVG (135 aa)) the chain is Mitochondrial intermembrane. Positions 90–93 (AMAK) are hinge. One can recognise a Rieske domain in the interval 123 to 214 (PHEIQEANSV…YEFDGDKVIV (92 aa)). Positions 159, 161, 178, and 181 each coordinate [2Fe-2S] cluster. An intrachain disulfide couples cysteine 164 to cysteine 180.

This sequence belongs to the Rieske iron-sulfur protein family. In terms of assembly, component of the ubiquinol-cytochrome c oxidoreductase (cytochrome b-c1 complex, complex III, CIII), a multisubunit enzyme composed of 10 subunits. The complex is composed of 3 respiratory subunits cytochrome b (COB), cytochrome c1 (CYT1) and Rieske protein (RIP1), 2 core protein subunits COR1 and QCR2, and 5 low-molecular weight protein subunits QCR6, QCR7, QCR8, QCR9 and QCR10. The complex exists as an obligatory dimer and forms supercomplexes (SCs) in the inner mitochondrial membrane with a monomer or a dimer of cytochrome c oxidase (complex IV, CIV), resulting in 2 different assemblies (supercomplexes III(2)IV and III(2)IV(2)). RIP1 interacts with QCR10 on the intermembrane space (IMS) side, and with QCR9. It depends on [2Fe-2S] cluster as a cofactor. In terms of processing, processed by both the mitochondrial processing peptidase (MPP) and the mitochondrial intermediate protease (MIP). Initially, MPP removes 22 amino acids from the newly imported precursor in the mitochondrial matrix. This proteolytic processing is then followed by a second proteolytic cleavage by MIP, which removes an octapeptide to generate mature-sized RIP1.

Its subcellular location is the mitochondrion inner membrane. The enzyme catalyses a quinol + 2 Fe(III)-[cytochrome c](out) = a quinone + 2 Fe(II)-[cytochrome c](out) + 2 H(+)(out). Its function is as follows. Component of the ubiquinol-cytochrome c oxidoreductase, a multisubunit transmembrane complex that is part of the mitochondrial electron transport chain which drives oxidative phosphorylation. The respiratory chain contains 3 multisubunit complexes succinate dehydrogenase (complex II, CII), ubiquinol-cytochrome c oxidoreductase (cytochrome b-c1 complex, complex III, CIII) and cytochrome c oxidase (complex IV, CIV), that cooperate to transfer electrons derived from NADH and succinate to molecular oxygen, creating an electrochemical gradient over the inner membrane that drives transmembrane transport and the ATP synthase. The cytochrome b-c1 complex catalyzes electron transfer from ubiquinol to cytochrome c, linking this redox reaction to translocation of protons across the mitochondrial inner membrane, with protons being carried across the membrane as hydrogens on the quinol. In the process called Q cycle, 2 protons are consumed from the matrix, 4 protons are released into the intermembrane space and 2 electrons are passed to cytochrome c. The Rieske protein is a catalytic core subunit containing a [2Fe-2S] iron-sulfur cluster. It cycles between 2 conformational states during catalysis to transfer electrons from the quinol bound in the Q(0) site in cytochrome b (COB) to cytochrome c1 (CYT1). In Saccharomyces cerevisiae (strain ATCC 204508 / S288c) (Baker's yeast), this protein is Cytochrome b-c1 complex subunit Rieske, mitochondrial (RIP1).